The sequence spans 319 residues: Transmembrane and ubiquitin-like domain-containing protein 2 (319 aa).

The chain crosses the membrane as a helical span at residues Val36–Thr56. Disordered stretches follow at residues Val88–Glu128 and Arg145–Cys165. Residues Pro95–Glu111 show a composition bias toward basic and acidic residues. Residues Ile173 to Ala246 form the Ubiquitin-like domain. 2 consecutive transmembrane segments (helical) span residues Leu264–Trp284 and Ala298–Gly318.

It is found in the membrane. The chain is Transmembrane and ubiquitin-like domain-containing protein 2 (Tmub2) from Mus musculus (Mouse).